A 62-amino-acid polypeptide reads, in one-letter code: Conotoxin Cal12.2e (62 aa).

The N-terminal stretch at 1-19 (MKLTCVLVVLLLVLPFGDL) is a signal peptide.

Belongs to the conotoxin O1 superfamily. Post-translationally, contains 4 disulfide bonds. Expressed by the venom duct.

It is found in the secreted. Probable neurotoxin. The sequence is that of Conotoxin Cal12.2e from Californiconus californicus (California cone).